Here is a 377-residue protein sequence, read N- to C-terminus: MITHFCELAAHRNYVLALYRHSLRNVSRINSGFVKHKMKKVITNEARKHKNDKSSWSIYRRLKELKLLSDKLEDDQVNDAYNLLDSFMKSVKKPKNELKGHLMKIRTEIETNKNIQDKTRLTRLNLLHRYIAKKQQNQLLTKHIPDEYKEKLLLPLALHEKGILRLAAIRNQFKKGGYHAKLSFTMAGKTRIWFIRSMLNKRKKQSLRLRNLITSEKRRYLEVCKIVESLNENANWALHEAIWERYLDDGYLHATSSKGYLKMVEIEDNSVKLQNQNDSKVVKCQRLQQWLSPIQSSILSLENYLNQRQMKYAKLKTKILEPKGVYDYYQKKSKRVFQNHMKTYKRMVKNELPFVNPFIERLSIGSILKRNGINVKY.

This sequence belongs to the RRG1 family.

It localises to the mitochondrion. In terms of biological role, essential for respiratory growth and required for mitochondrial protein synthesis. Required for vacuolar acidification. The polypeptide is Required for respiratory growth protein 1, mitochondrial (RRG1) (Candida glabrata (strain ATCC 2001 / BCRC 20586 / JCM 3761 / NBRC 0622 / NRRL Y-65 / CBS 138) (Yeast)).